A 294-amino-acid polypeptide reads, in one-letter code: Ribosomal RNA small subunit methyltransferase A (294 aa).

S-adenosyl-L-methionine is bound by residues N31, L33, G58, E79, D111, and N136.

Belongs to the class I-like SAM-binding methyltransferase superfamily. rRNA adenine N(6)-methyltransferase family. RsmA subfamily.

The protein resides in the cytoplasm. It catalyses the reaction adenosine(1518)/adenosine(1519) in 16S rRNA + 4 S-adenosyl-L-methionine = N(6)-dimethyladenosine(1518)/N(6)-dimethyladenosine(1519) in 16S rRNA + 4 S-adenosyl-L-homocysteine + 4 H(+). In terms of biological role, specifically dimethylates two adjacent adenosines (A1518 and A1519) in the loop of a conserved hairpin near the 3'-end of 16S rRNA in the 30S particle. May play a critical role in biogenesis of 30S subunits. The protein is Ribosomal RNA small subunit methyltransferase A of Lactobacillus acidophilus (strain ATCC 700396 / NCK56 / N2 / NCFM).